We begin with the raw amino-acid sequence, 360 residues long: MIIYATAVQTINSFVRLESLKEVYGLIWIFVPIFSLILGIITGVLVIVWLEREISAGIQQRIGPEYAGPLGILQALADGTKLLFKENLRPSRGNPPLFSIGPSIAVISILLSYSVIPFSNHLVLADLNIGIFLWIAISSIAPIGLLMSGYGSNNKYSFLGGLRAAAQSISYEIPLTLCVLSISLLSNSLSTVDIVEAQSKYGFWGWNLWRQPIGFIIFLISSLAECERLPFDLPEAEEELIAGYQTEYSGIKFGLFYVASYLNLLISSLFVTVLYLGGWNISIPYISILELFQRDQIFGTTIGIFITLAKTYLFLFISIATRWTLPRLRMDQLLNLGWKFLLPISLGNLLLTTSFQLFSL.

Helical transmembrane passes span 27-47 (IWIF…VLVI), 98-118 (FSIG…VIPF), 129-149 (IGIF…LMSG), 165-185 (AAQS…ISLL), 203-223 (FWGW…ISSL), 248-268 (YSGI…LISS), 269-289 (LFVT…ISIL), 297-317 (IFGT…FLFI), and 340-360 (FLLP…LFSL).

This sequence belongs to the complex I subunit 1 family. NDH is composed of at least 16 different subunits, 5 of which are encoded in the nucleus.

Its subcellular location is the plastid. It localises to the chloroplast thylakoid membrane. The catalysed reaction is a plastoquinone + NADH + (n+1) H(+)(in) = a plastoquinol + NAD(+) + n H(+)(out). It carries out the reaction a plastoquinone + NADPH + (n+1) H(+)(in) = a plastoquinol + NADP(+) + n H(+)(out). Its function is as follows. NDH shuttles electrons from NAD(P)H:plastoquinone, via FMN and iron-sulfur (Fe-S) centers, to quinones in the photosynthetic chain and possibly in a chloroplast respiratory chain. The immediate electron acceptor for the enzyme in this species is believed to be plastoquinone. Couples the redox reaction to proton translocation, and thus conserves the redox energy in a proton gradient. The sequence is that of NAD(P)H-quinone oxidoreductase subunit 1, chloroplastic from Barbarea verna (Land cress).